We begin with the raw amino-acid sequence, 326 residues long: Biotin synthase (326 aa).

A Radical SAM core domain is found at 50 to 279; it reads FNGEKVDVEQ…ESVIKISGGR (230 aa). 3 residues coordinate [4Fe-4S] cluster: cysteine 68, cysteine 72, and cysteine 75. Positions 112, 145, 204, and 274 each coordinate [2Fe-2S] cluster.

Belongs to the radical SAM superfamily. Biotin synthase family. In terms of assembly, homodimer. It depends on [4Fe-4S] cluster as a cofactor. [2Fe-2S] cluster serves as cofactor.

It catalyses the reaction (4R,5S)-dethiobiotin + (sulfur carrier)-SH + 2 reduced [2Fe-2S]-[ferredoxin] + 2 S-adenosyl-L-methionine = (sulfur carrier)-H + biotin + 2 5'-deoxyadenosine + 2 L-methionine + 2 oxidized [2Fe-2S]-[ferredoxin]. It participates in cofactor biosynthesis; biotin biosynthesis; biotin from 7,8-diaminononanoate: step 2/2. In terms of biological role, catalyzes the conversion of dethiobiotin (DTB) to biotin by the insertion of a sulfur atom into dethiobiotin via a radical-based mechanism. This is Biotin synthase from Nitrosopumilus maritimus (strain SCM1).